Consider the following 85-residue polypeptide: Large ribosomal subunit protein bL27 (85 aa).

It belongs to the bacterial ribosomal protein bL27 family.

This Campylobacter curvus (strain 525.92) protein is Large ribosomal subunit protein bL27.